The primary structure comprises 551 residues: Cu(2+) suppressing and bleomycin sensitive protein 1 (551 aa).

2 coiled-coil regions span residues 174–213 (REID…EEID) and 249–300 (NSLL…DSGK). A disordered region spans residues 513-551 (EEKAQNSTSSDGSDDDDNGESGIDSNSNDSEPESEYQQE). Over residues 532–541 (ESGIDSNSND) the composition is skewed to low complexity. The segment covering 542-551 (SEPESEYQQE) has biased composition (acidic residues).

The protein belongs to the CUB1 family. Monomer. Phosphorylated by PKA in vitro.

Its subcellular location is the cytoplasm. The protein localises to the nucleus. Its function is as follows. Involved in bleomycin tolerance with links to DNA repair and/or proteasome function. In Saccharomyces cerevisiae (strain ATCC 204508 / S288c) (Baker's yeast), this protein is Cu(2+) suppressing and bleomycin sensitive protein 1 (CUB1).